The primary structure comprises 86 residues: Large ribosomal subunit protein bL27 (86 aa).

Belongs to the bacterial ribosomal protein bL27 family.

The sequence is that of Large ribosomal subunit protein bL27 from Xanthomonas campestris pv. campestris (strain 8004).